Consider the following 331-residue polypeptide: MASLKDVARLAGVSMMTVSRVMHNAESVRPATRDRVLQAIQTLNYVPDLSARKMRAQGRKPSTLAVLAQDTATTPFSVDILLAIEQTASEFGWNSFLINIFSEDDAARAARQLLAHRPDGIIYTTMGLRHITLPESLYGENIVLANCVADDPALPSYIPDDYTAQYESTQHLLAAGYRQPLCFWLPESALATGYRRQGFEQAWRDAGRDLAEVKQFHMATGDDHYTDLASLLNAHFKSGKPDFDVLICGNDRAAFVAYQVLLAKGVRIPQDVAVMGFDNLVGVGHLFLPPLTTIQLPHDIIGREAALHIIEGREGGRVTRIPCPLLIRCST.

Positions 1–56 (MASLKDVARLAGVSMMTVSRVMHNAESVRPATRDRVLQAIQTLNYVPDLSARKMRA) constitute an HTH lacI-type domain. Positions 4–23 (LKDVARLAGVSMMTVSRVMH) form a DNA-binding region, H-T-H motif.

Functionally, repressor for the csc operon. Binds D-fructose as an inducer. The chain is Sucrose operon repressor (cscR) from Escherichia coli.